Reading from the N-terminus, the 701-residue chain is Potassium-transporting ATPase ATP-binding subunit (701 aa).

The disordered stretch occupies residues 1–28; it reads MNPDAPTPKNKSSRSRPSDRPQARKKAK. Helical transmembrane passes span 57–77, 90–110, 245–265, and 276–296; these read MFLV…PNLF, GILT…EAVA, VLLA…PVFA, and ILVA…LSAI. The 4-aspartylphosphate intermediate role is filled by Asp329. ATP-binding positions include Asp366, Glu370, 397–404, and Lys416; that span reads FSAKTRMS. Positions 539 and 543 each coordinate Mg(2+). The next 3 membrane-spanning stretches (helical) occupy residues 599–619, 635–655, and 681–701; these read FSLA…FASA, AVLS…PLAL, and VIAP…VGLA.

This sequence belongs to the cation transport ATPase (P-type) (TC 3.A.3) family. Type IA subfamily. The system is composed of three essential subunits: KdpA, KdpB and KdpC.

It is found in the cell membrane. It catalyses the reaction K(+)(out) + ATP + H2O = K(+)(in) + ADP + phosphate + H(+). In terms of biological role, part of the high-affinity ATP-driven potassium transport (or Kdp) system, which catalyzes the hydrolysis of ATP coupled with the electrogenic transport of potassium into the cytoplasm. This subunit is responsible for energy coupling to the transport system and for the release of the potassium ions to the cytoplasm. The sequence is that of Potassium-transporting ATPase ATP-binding subunit from Anabaena sp. (strain L31).